The primary structure comprises 306 residues: Non-specific ribonucleoside hydrolase RihC (306 aa).

Residue H235 is part of the active site.

It belongs to the IUNH family. RihC subfamily.

In terms of biological role, hydrolyzes both purine and pyrimidine ribonucleosides with a broad-substrate specificity. This chain is Non-specific ribonucleoside hydrolase RihC, found in Salmonella heidelberg (strain SL476).